A 474-amino-acid chain; its full sequence is Glutamate--tRNA ligase (474 aa).

The 'HIGH' region motif lies at 9–19; that stretch reads PSPTGYLHVGG. The short motif at 240–244 is the 'KMSKS' region element; sequence KLSKR. ATP is bound at residue Lys-243.

The protein belongs to the class-I aminoacyl-tRNA synthetase family. Glutamate--tRNA ligase type 1 subfamily. Monomer.

It is found in the cytoplasm. The enzyme catalyses tRNA(Glu) + L-glutamate + ATP = L-glutamyl-tRNA(Glu) + AMP + diphosphate. Functionally, catalyzes the attachment of glutamate to tRNA(Glu) in a two-step reaction: glutamate is first activated by ATP to form Glu-AMP and then transferred to the acceptor end of tRNA(Glu). The chain is Glutamate--tRNA ligase from Aliivibrio fischeri (strain MJ11) (Vibrio fischeri).